A 265-amino-acid polypeptide reads, in one-letter code: HUWE1-associated protein modifying stress responses (265 aa).

Disordered regions lie at residues 1-22 (MEDK…HWFS), 145-170 (RNSR…GSSV), 195-218 (VRSS…RRNG), and 240-265 (GTRK…NRMI). 2 stretches are compositionally biased toward polar residues: residues 156-170 (VSPN…GSSV) and 195-212 (VRSS…SSNT).

Belongs to the HAPSTR1 family. As to quaternary structure, oligomer.

The protein localises to the nucleus. The protein resides in the cytoplasm. In terms of biological role, acts as a central player within a network of stress response pathways promoting cellular adaptability. Functions as a negative regulator of TP53/P53 in the cellular response to telomere erosion and probably also DNA damage. The polypeptide is HUWE1-associated protein modifying stress responses (Xenopus tropicalis (Western clawed frog)).